A 1208-amino-acid polypeptide reads, in one-letter code: DNA-directed RNA polymerase subunit beta (1208 aa).

It belongs to the RNA polymerase beta chain family. The RNAP catalytic core consists of 2 alpha, 1 beta, 1 beta' and 1 omega subunit. When a sigma factor is associated with the core the holoenzyme is formed, which can initiate transcription.

It carries out the reaction RNA(n) + a ribonucleoside 5'-triphosphate = RNA(n+1) + diphosphate. In terms of biological role, DNA-dependent RNA polymerase catalyzes the transcription of DNA into RNA using the four ribonucleoside triphosphates as substrates. This chain is DNA-directed RNA polymerase subunit beta, found in Enterococcus faecium (Streptococcus faecium).